The sequence spans 533 residues: Intestinal-type alkaline phosphatase (533 aa).

The signal sequence occupies residues 1-19; sequence MQGACVLLLLGLHLQLSLG. Asp61 serves as a coordination point for Mg(2+). Positions 61 and 111 each coordinate Zn(2+). Ser111 acts as the Phosphoserine intermediate in catalysis. A disulfide bond links Cys140 and Cys202. Mg(2+) is bound at residue Ser174. Glu235 serves as a coordination point for Ca(2+). Asn268 carries N-linked (GlcNAc...) asparagine glycosylation. Ca(2+)-binding residues include Phe288, Glu289, and Asp304. Glu330 provides a ligand contact to Mg(2+). The Zn(2+) site is built by Asp335, His339, Asp376, and His377. Asn429 carries N-linked (GlcNAc...) asparagine glycosylation. A Zn(2+)-binding site is contributed by His451. Cys486 and Cys493 are oxidised to a cystine. Residue Asp506 is the site of GPI-anchor amidated aspartate attachment. A propeptide spans 507-533 (removed in mature form); sequence AAHLAASPPPLALLAGAMLLLLAPTLY.

Belongs to the alkaline phosphatase family. In terms of assembly, homodimer. Mg(2+) serves as cofactor. It depends on Zn(2+) as a cofactor. The cofactor is Ca(2+).

Its subcellular location is the cell membrane. It catalyses the reaction a phosphate monoester + H2O = an alcohol + phosphate. Functionally, alkaline phosphatase that can hydrolyze various phosphate compounds. The polypeptide is Intestinal-type alkaline phosphatase (ALPI) (Bos taurus (Bovine)).